The primary structure comprises 456 residues: UDP-glycosyltransferase 84B1 (456 aa).

Residues Ser278, 332-334, 349-357, and 371-374 contribute to the UDP-alpha-D-glucose site; these read SPQ, HCGWNSTME, and WTDQ.

It belongs to the UDP-glycosyltransferase family.

Possesses low quercetin 7-O-glucosyltransferase activity in vitro. The protein is UDP-glycosyltransferase 84B1 (UGT84B1) of Arabidopsis thaliana (Mouse-ear cress).